A 258-amino-acid chain; its full sequence is Imidazole glycerol phosphate synthase subunit HisF (258 aa).

Residues Asp11 and Asp130 contribute to the active site.

It belongs to the HisA/HisF family. As to quaternary structure, heterodimer of HisH and HisF.

Its subcellular location is the cytoplasm. It carries out the reaction 5-[(5-phospho-1-deoxy-D-ribulos-1-ylimino)methylamino]-1-(5-phospho-beta-D-ribosyl)imidazole-4-carboxamide + L-glutamine = D-erythro-1-(imidazol-4-yl)glycerol 3-phosphate + 5-amino-1-(5-phospho-beta-D-ribosyl)imidazole-4-carboxamide + L-glutamate + H(+). Its pathway is amino-acid biosynthesis; L-histidine biosynthesis; L-histidine from 5-phospho-alpha-D-ribose 1-diphosphate: step 5/9. IGPS catalyzes the conversion of PRFAR and glutamine to IGP, AICAR and glutamate. The HisF subunit catalyzes the cyclization activity that produces IGP and AICAR from PRFAR using the ammonia provided by the HisH subunit. The protein is Imidazole glycerol phosphate synthase subunit HisF of Enterobacter sp. (strain 638).